The primary structure comprises 514 residues: Cytochrome P450 monooxygenase ptmQ (514 aa).

A helical transmembrane segment spans residues 3-23; the sequence is YVAQSPWIATLIVTATTYCTL. N-linked (GlcNAc...) asparagine glycosylation occurs at Asn-148. Cys-452 serves as a coordination point for heme. Residue Asn-486 is glycosylated (N-linked (GlcNAc...) asparagine).

This sequence belongs to the cytochrome P450 family. Requires heme as cofactor.

It localises to the membrane. It functions in the pathway secondary metabolite biosynthesis. Functionally, cytochrome P450 monooxygenase; part of the gene cluster that mediates the biosynthesis of the indole diterpenes penitrems. The geranylgeranyl diphosphate (GGPP) synthase ptmG catalyzes the first step in penitrem biosynthesis via conversion of farnesyl pyrophosphate and isopentyl pyrophosphate into geranylgeranyl pyrophosphate (GGPP). Condensation of indole-3-glycerol phosphate with GGPP by the prenyl transferase ptmC then forms 3-geranylgeranylindole (3-GGI). Epoxidation by the FAD-dependent monooxygenase ptmM leads to a epoxidized-GGI that is substrate of the terpene cyclase ptmB for cyclization to yield paspaline. Paspaline is subsequently converted to 13-desoxypaxilline by the cytochrome P450 monooxygenase ptmP, the latter being then converted to paxilline by the cytochrome P450 monooxygenase ptmQ. Paxilline is converted to beta-paxitriol via C-10 ketoreduction by the short-chain dehydrogenase ptmH which can be monoprenylated at the C-20 by the indole diterpene prenyltransferase ptmD. A two-step elimination (acetylation and elimination) process performed by the O-acetyltransferase ptmV and ptmI leads to the production of the prenylated form of penijanthine. The FAD-linked oxidoreductase ptmO then converts the prenylated form of penijanthine into PC-M5 which is in turn transformed into PC-M4 by the aromatic dimethylallyltransferase ptmE. Five sequential oxidative transformations performed by the cytochrome P450 monooxygenases ptmK, ptmU, ptmL, ptmN and ptmJ yield the various penitrem compounds. PtmK, ptmU and ptmM are involved in the formation of the key bicyclic ring of penitrem C via the formation of the intermediates secopenitrem D and penitrem D. PtmL catalyzes the epoxidation of penitrem D and C to yield penitrem B and F, respectively. PtmJ catalyzes the last benzylic hydroxylation to convert penitrem B to prenitrem E and penitrem F to penitrem A. This chain is Cytochrome P450 monooxygenase ptmQ, found in Penicillium ochrochloron.